The chain runs to 315 residues: MHAASAFTLSGRDLLGIEGLIASEITGLLDLAEEFVELNRQIEKKRTTLRGRTQINLFSEASTRTQSSFEIAGKRLGADVMNMSVGSSSVKKGETLIDTAITLNAMHPDILVVRHHASGAVALLARKVDCCVVNAGDGAHEHPTQALLDALTIRRNKGRIAGLTVAICGDVLHSRVARSNIILLHTLGAKVRLVAPSTLLPAGIESLGVEVFRTMEEGLKDADIVMMLRLQRERMAGSFIPSVKEYFHYFGLDEAKLRHAAPDALVMHPGPMNRGVEIDSAVADGPRSLIREQVEMGVAVRMAVLDTLARKLPNA.

Arginine 64 and threonine 65 together coordinate carbamoyl phosphate. Position 92 (lysine 92) interacts with L-aspartate. Residues arginine 114, histidine 142, and glutamine 145 each contribute to the carbamoyl phosphate site. L-aspartate contacts are provided by arginine 175 and arginine 229. 2 residues coordinate carbamoyl phosphate: glycine 270 and proline 271.

This sequence belongs to the aspartate/ornithine carbamoyltransferase superfamily. ATCase family. As to quaternary structure, heterododecamer (2C3:3R2) of six catalytic PyrB chains organized as two trimers (C3), and six regulatory PyrI chains organized as three dimers (R2).

The catalysed reaction is carbamoyl phosphate + L-aspartate = N-carbamoyl-L-aspartate + phosphate + H(+). It participates in pyrimidine metabolism; UMP biosynthesis via de novo pathway; (S)-dihydroorotate from bicarbonate: step 2/3. In terms of biological role, catalyzes the condensation of carbamoyl phosphate and aspartate to form carbamoyl aspartate and inorganic phosphate, the committed step in the de novo pyrimidine nucleotide biosynthesis pathway. In Xanthobacter autotrophicus (strain ATCC BAA-1158 / Py2), this protein is Aspartate carbamoyltransferase catalytic subunit.